We begin with the raw amino-acid sequence, 207 residues long: UPF0328 protein ECU02_1590/ECU04_0060/ECU08_2120 (207 aa).

Disordered stretches follow at residues 1 to 154 and 180 to 207; these read MPRP…HSHT and GRLH…LATL. Composition is skewed to basic and acidic residues over residues 14 to 24 and 75 to 97; these read DHPDFRSESSA and HTEG…ETES. Polar residues-rich tracts occupy residues 98–121 and 133–149; these read PKPQ…SQNT and SRPS…QSPH.

It belongs to the UPF0328 family.

The chain is UPF0328 protein ECU02_1590/ECU04_0060/ECU08_2120 from Encephalitozoon cuniculi (strain GB-M1) (Microsporidian parasite).